Consider the following 232-residue polypeptide: Ubiquinone biosynthesis O-methyltransferase (232 aa).

Arg-36, Gly-55, Asp-76, and Met-120 together coordinate S-adenosyl-L-methionine.

Belongs to the methyltransferase superfamily. UbiG/COQ3 family.

It carries out the reaction a 3-demethylubiquinol + S-adenosyl-L-methionine = a ubiquinol + S-adenosyl-L-homocysteine + H(+). The catalysed reaction is a 3-(all-trans-polyprenyl)benzene-1,2-diol + S-adenosyl-L-methionine = a 2-methoxy-6-(all-trans-polyprenyl)phenol + S-adenosyl-L-homocysteine + H(+). The protein operates within cofactor biosynthesis; ubiquinone biosynthesis. Its function is as follows. O-methyltransferase that catalyzes the 2 O-methylation steps in the ubiquinone biosynthetic pathway. This Burkholderia thailandensis (strain ATCC 700388 / DSM 13276 / CCUG 48851 / CIP 106301 / E264) protein is Ubiquinone biosynthesis O-methyltransferase.